Here is a 350-residue protein sequence, read N- to C-terminus: MEKQPQNSRRGLAPREVPPAVGLLLIMALMNTLLYLCLDHFFIAPRQSTVDPTHCPYGHFRIGQMKNCSPWLSCEELRTEVRQLKRVGEGAVKRVFLSEWKEHKVALSQLTSLEMKDDFLHGLQMLKSLQGTHVVTLLGYCEDDNTMLTEYHPLGSLSNLEETLNLSKYQNVNTWQHRLELAMDYVSIINYLHHSPVGTRVMCDSNDLPKTLSQYLLTSNFSILANDLDALPLVNHSSGMLVKCGHRELHGDFVAPEQLWPYGEDVPFHDDLMPSYDEKIDIWKIPDISSFLLGHIEGSDMVRFHLFDIHKACKSQTPSERPTAQDVLETYQKVLDTLRDAMMSQAREML.

M1 is modified (N-acetylmethionine). Residues 1–20 (MEKQPQNSRRGLAPREVPPA) are Cytoplasmic-facing. A helical; Signal-anchor for type II membrane protein membrane pass occupies residues 21 to 43 (VGLLLIMALMNTLLYLCLDHFFI). Topologically, residues 44 to 350 (APRQSTVDPT…AMMSQAREML (307 aa)) are lumenal. The region spanning 81–350 (VRQLKRVGEG…AMMSQAREML (270 aa)) is the Protein kinase domain. N-linked (GlcNAc...) asparagine glycans are attached at residues N165, N220, and N235.

It belongs to the protein kinase superfamily. Ser/Thr protein kinase family. STKL subfamily. Highest expression is observed in brain, skeletal muscle, kidney and heart in fetal and adult tissues.

Its subcellular location is the endoplasmic reticulum membrane. It carries out the reaction 3-O-[beta-D-GalNAc-(1-&gt;3)-beta-D-GlcNAc-(1-&gt;4)-alpha-D-Man]-L-Thr-[protein] + ATP = 3-O-[beta-D-GalNAc-(1-&gt;3)-beta-D-GlcNAc-(1-&gt;4)-(O-6-P-alpha-D-Man)]-Thr-[protein] + ADP + H(+). Functionally, protein O-mannose kinase that specifically mediates phosphorylation at the 6-position of an O-mannose of the trisaccharide (N-acetylgalactosamine (GalNAc)-beta-1,3-N-acetylglucosamine (GlcNAc)-beta-1,4-mannose) to generate phosphorylated O-mannosyl trisaccharide (N-acetylgalactosamine-beta-1,3-N-acetylglucosamine-beta-1,4-(phosphate-6-)mannose). Phosphorylated O-mannosyl trisaccharide is a carbohydrate structure present in alpha-dystroglycan (DAG1), which is required for binding laminin G-like domain-containing extracellular proteins with high affinity. Only shows kinase activity when the GalNAc-beta-3-GlcNAc-beta-terminus is linked to the 4-position of O-mannose, suggesting that this disaccharide serves as the substrate recognition motif. This chain is Protein O-mannose kinase (POMK), found in Homo sapiens (Human).